The sequence spans 510 residues: Light-independent protochlorophyllide reductase subunit B (510 aa).

Asp-36 serves as a coordination point for [4Fe-4S] cluster. The active-site Proton donor is Asp-296. 431 to 432 (GM) contacts substrate.

It belongs to the ChlB/BchB/BchZ family. In terms of assembly, protochlorophyllide reductase is composed of three subunits; ChlL, ChlN and ChlB. Forms a heterotetramer of two ChlB and two ChlN subunits. It depends on [4Fe-4S] cluster as a cofactor.

Its subcellular location is the plastid. The protein localises to the chloroplast. It carries out the reaction chlorophyllide a + oxidized 2[4Fe-4S]-[ferredoxin] + 2 ADP + 2 phosphate = protochlorophyllide a + reduced 2[4Fe-4S]-[ferredoxin] + 2 ATP + 2 H2O. It functions in the pathway porphyrin-containing compound metabolism; chlorophyll biosynthesis (light-independent). Its function is as follows. Component of the dark-operative protochlorophyllide reductase (DPOR) that uses Mg-ATP and reduced ferredoxin to reduce ring D of protochlorophyllide (Pchlide) to form chlorophyllide a (Chlide). This reaction is light-independent. The NB-protein (ChlN-ChlB) is the catalytic component of the complex. This is Light-independent protochlorophyllide reductase subunit B from Physcomitrium patens (Spreading-leaved earth moss).